A 148-amino-acid polypeptide reads, in one-letter code: WAP four-disulfide core domain protein 6B (148 aa).

Residues 1-35 form the signal peptide; the sequence is MPPNRLLLPKMRLWGLLPFLVPFILLWSIQEPALA. Residues 37–84 enclose the WAP domain; the sequence is GVFIRTCPKYNKIKCDFEERNQCLRHRECPGEERCCLFACGRKCLDLS. 7 cysteine pairs are disulfide-bonded: C43–C72, C51–C76, C59–C71, C65–C80, C88–C138, C97–C121, and C113–C134. Residues 88 to 138 enclose the BPTI/Kunitz inhibitor domain; it reads CSLPQDAGPCLAYLPRWWYNQDTKLCIEFIYGGCQGNPNNFESKAVCTSIC.

It is found in the secreted. In Mus musculus (Mouse), this protein is WAP four-disulfide core domain protein 6B (Wfdc6b).